A 259-amino-acid chain; its full sequence is Cell division protein DivIB (259 aa).

Residues 1–27 (MADGKVIDIEQKVPDFREQRRRKSRRR) are Cytoplasmic-facing. The helical transmembrane segment at 28–45 (LVLYISILAFFLLFVYYF) threads the bilayer. At 46 to 259 (QSDYSTVGHV…QEEEEIEIEE (214 aa)) the chain is on the extracellular side. The region spanning 50–118 (STVGHVDVYG…RSITLYVDEY (69 aa)) is the POTRA domain.

It belongs to the FtsQ/DivIB family. DivIB subfamily.

The protein resides in the cell membrane. In terms of biological role, cell division protein that may be involved in stabilizing or promoting the assembly of the division complex. This is Cell division protein DivIB from Bacillus selenitireducens (strain ATCC 700615 / DSM 15326 / MLS10).